The primary structure comprises 442 residues: Citrate transporter CitP (442 aa).

Helical transmembrane passes span 27 to 47 (ISGI…IAIS), 59 to 79 (IFAL…LPIF), 83 to 103 (LGGG…TNVI), 114 to 134 (FING…SSLF), 151 to 171 (VAFI…VIIG), 177 to 197 (AILY…IVPL), 209 to 229 (SAGI…LAII), 267 to 287 (YVQL…GTML), 293 to 313 (GINA…FGLL), 321 to 341 (VIMF…AGVG), 349 to 369 (VLLA…IVAI), 387 to 409 (AAIT…VLAA), and 421 to 441 (MGNR…VTFM).

This sequence belongs to the 2-hydroxycarboxylate transporter (2-HCT) (TC 2.A.24) family.

It localises to the cell membrane. It carries out the reaction (R)-lactate(in) + citrate(out) = (R)-lactate(out) + citrate(in). It catalyses the reaction (S)-lactate(in) + citrate(out) = (S)-lactate(out) + citrate(in). The enzyme catalyses citrate(in) + H(+)(in) = citrate(out) + H(+)(out). The transport of citrate is unaffected by the presence of citrate in the growth media. In terms of biological role, secondary transporter involved in citrate metabolism. During cometabolism of citrate and glucose, catalyzes the uptake of divalent citrate into the cell coupled to the exit of monovalent lactate, the end product of glycolysis in L.lactis. The citrate/lactate exchange is electrogenic and results in the generation of a membrane potential. Plays an important role in resistance against lactate toxicity at low pH. In the absence of glucose, i.e. when no lactate is produced, CitP catalyzes the uptake of citrate in exchange with the citrate metabolism intermediates pyruvate and alpha-acetolactate, and the end product acetate. In the absence of glucose, CitP can also catalyze the proton-dependent transport of citrate. In vitro, shows a broad substrate specificity. Can transport a wide variety of mono- and dicarboxylates of the form X-CR(2)-COO(-), where X represents OH (2-hydroxy acid), O (2-keto acid), or H (acid) and R groups differ in size, hydrophobicity and composition. Many of the substrates are intermediates or products of amino acid metabolism, suggesting that CitP may have a broader physiological function than its role in citrate metabolism. The polypeptide is Citrate transporter CitP (Lactococcus lactis subsp. lactis (Streptococcus lactis)).